The following is a 473-amino-acid chain: Psoralen synthase (473 aa).

The chain crosses the membrane as a helical span at residues 1–17 (YFFPLFLVTIFLYKWLV). The substrate specificity stretch occupies residues 350-355 (TAPLLV). Cysteine 425 lines the heme pocket.

The protein belongs to the cytochrome P450 family. Heme serves as cofactor.

Its subcellular location is the microsome membrane. It carries out the reaction (7S)-marmesin + reduced [NADPH--hemoprotein reductase] + O2 = psoralen + acetone + oxidized [NADPH--hemoprotein reductase] + 2 H2O + H(+). The protein operates within secondary metabolite biosynthesis. In terms of biological role, involved in the biosynthesis of coumarins and furanocoumarins (FCs), natural products required for defense responses against attacks by predators with potential medical and agroindustrial usages such as anticoagulant, rodenticide and artificial vanilla substitutes. Involved in linear furanocumarin (psoralen) biosynthesis. Converts marmesin to psoralen and, with much lower affinity, 5-hydroxymarmesin to bergaptol. The polypeptide is Psoralen synthase (Pastinaca sativa (Wild parsnip)).